Here is a 396-residue protein sequence, read N- to C-terminus: uncharacterized protein (396 aa).

12 helical membrane passes run 8 to 28, 44 to 64, 73 to 93, 97 to 117, 133 to 153, 158 to 178, 213 to 233, 250 to 270, 276 to 296, 304 to 324, 338 to 358, and 363 to 383; these read TASG…ILAS, ISYV…ISGV, PLVV…PLSP, LAFV…AGTY, VLVK…ITFL, MFYG…IIYL, ALII…IWLP, LLSY…VLLN, VFIT…MLTV, ITAF…ITLM, IVAT…GLIA, and IAHI…AAAF.

The protein belongs to the major facilitator superfamily.

It localises to the cell membrane. This is an uncharacterized protein from Bacillus subtilis (strain 168).